A 778-amino-acid chain; its full sequence is Tastin (778 aa).

The span at 1 to 11 (MTTRQATKDPL) shows a compositional bias: basic and acidic residues. The disordered stretch occupies residues 1–115 (MTTRQATKDP…PGPPAQTEAP (115 aa)). A phosphoserine mark is found at Ser-16, Ser-98, and Ser-170. The tract at residues 212–244 (ISPSGPSFHPSTRPSFQELRRETAGSSRTSVSQ) is disordered. The span at 235–244 (AGSSRTSVSQ) shows a compositional bias: polar residues. Phosphoserine occurs at positions 324, 334, 344, and 362. Thr-363 is modified (phosphothreonine). At Ser-376 the chain carries Phosphoserine. 3 disordered regions span residues 406-425 (EGSG…NRTP), 508-587 (ECGE…AEPR), and 600-641 (PESS…RVEL). Positions 513 to 523 (QPCPPAEPGPP) are enriched in pro residues. 4 tandem repeats follow at residues 516–548 (PPAE…PEPY), 549–581 (PPAE…PEPC), 582–614 (PPAE…PEPC), and 615–647 (PPAE…SEPC). Residues 516–647 (PPAEPGPPEA…RVELGASEPC (132 aa)) form a 4 X 33 AA approximate tandem repeats region. Residues 560–574 (CRSEPEIPESSRQEQ) show a composition bias toward basic and acidic residues. Over residues 612–622 (EPCPPAEPGPL) the composition is skewed to pro residues.

As to quaternary structure, directly binds bystin, and indirectly trophinin. Strong expression at implantation sites. Was exclusively localized to the apical side of the syncytiotrophoblast. Also found in macrophages.

The protein localises to the cytoplasm. Its function is as follows. Could be involved with bystin and trophinin in a cell adhesion molecule complex that mediates an initial attachment of the blastocyst to uterine epithelial cells at the time of the embryo implantation. The polypeptide is Tastin (TROAP) (Homo sapiens (Human)).